The primary structure comprises 496 residues: Glycerol kinase (496 aa).

Thr-14 serves as a coordination point for ADP. Thr-14 and Thr-15 together coordinate ATP. Thr-14 lines the sn-glycerol 3-phosphate pocket. Sn-glycerol 3-phosphate contacts are provided by Arg-84, Glu-85, Tyr-136, and Asp-246. Arg-84, Glu-85, Tyr-136, Asp-246, and Gln-247 together coordinate glycerol. Residues Thr-268 and Gly-313 each contribute to the ADP site. 4 residues coordinate ATP: Thr-268, Gly-313, Gln-317, and Gly-414. Gly-414 and Asn-418 together coordinate ADP.

It belongs to the FGGY kinase family.

It carries out the reaction glycerol + ATP = sn-glycerol 3-phosphate + ADP + H(+). It participates in polyol metabolism; glycerol degradation via glycerol kinase pathway; sn-glycerol 3-phosphate from glycerol: step 1/1. Inhibited by fructose 1,6-bisphosphate (FBP). Functionally, key enzyme in the regulation of glycerol uptake and metabolism. Catalyzes the phosphorylation of glycerol to yield sn-glycerol 3-phosphate. This Myxococcus xanthus (strain DK1622) protein is Glycerol kinase.